The following is a 327-amino-acid chain: NADPH-dependent aldose reductase GRE3 (327 aa).

The Proton donor role is filled by Tyr-49. A substrate-binding site is contributed by His-111. Position 219–286 (Ser-219–Asn-286) interacts with NADP(+).

It belongs to the aldo/keto reductase family. In terms of assembly, monomer.

It is found in the cytoplasm. The protein localises to the nucleus. It carries out the reaction an alditol + NAD(+) = an aldose + NADH + H(+). The catalysed reaction is an alditol + NADP(+) = an aldose + NADPH + H(+). Its function is as follows. Aldose reductase with a broad substrate specificity. Reduces the cytotoxic compound methylglyoxal (MG) to acetol and (R)-lactaldehyde under stress conditions. MG is synthesized via a bypath of glycolysis from dihydroxyacetone phosphate and is believed to play a role in cell cycle regulation and stress adaptation. In pentose-fermenting yeasts, aldose reductase catalyzes the reduction of xylose into xylitol. The purified enzyme catalyzes this reaction, but the inability of S.cerevisiae to grow on xylose as sole carbon source indicates that the physiological function is more likely methylglyoxal reduction. This Saccharomyces cerevisiae (strain ATCC 204508 / S288c) (Baker's yeast) protein is NADPH-dependent aldose reductase GRE3.